We begin with the raw amino-acid sequence, 370 residues long: D-alanine--D-alanine ligase (370 aa).

Positions 144 to 352 (KKIFADAGIP…YGALIERLVD (209 aa)) constitute an ATP-grasp domain. 177-232 (EEVLTYPVFVKPANLGSSVGISKATNKKELVDAMTEAFLYDRRVVVEQGVVAREIE) contributes to the ATP binding site. Asp306, Glu319, and Asn321 together coordinate Mg(2+).

The protein belongs to the D-alanine--D-alanine ligase family. It depends on Mg(2+) as a cofactor. Requires Mn(2+) as cofactor.

It localises to the cytoplasm. It catalyses the reaction 2 D-alanine + ATP = D-alanyl-D-alanine + ADP + phosphate + H(+). It functions in the pathway cell wall biogenesis; peptidoglycan biosynthesis. In terms of biological role, cell wall formation. This chain is D-alanine--D-alanine ligase, found in Listeria monocytogenes serovar 1/2a (strain ATCC BAA-679 / EGD-e).